A 629-amino-acid polypeptide reads, in one-letter code: Neuronal acetylcholine receptor subunit alpha-4 (629 aa).

Positions 1-30 are cleaved as a signal peptide; that stretch reads MEIGGSGAPPPLLLLPLLLLLGTGLLPASS. Over 32-249 the chain is Extracellular; that stretch reads IETRAHAEER…IIRRLPLFYT (218 aa). Residue Asn-59 is glycosylated (N-linked (GlcNAc...) asparagine). Ca(2+) is bound by residues Val-78 and Glu-80. 2 N-linked (GlcNAc...) asparagine glycosylation sites follow: Asn-109 and Asn-176. 2 disulfide bridges follow: Cys-163–Cys-177 and Cys-227–Cys-228. Residues 250–270 traverse the membrane as a helical segment; the sequence is INLIIPCLLISCLTVLVFYLP. A lipid anchor (S-palmitoyl cysteine) is attached at Cys-273. The next 2 membrane-spanning stretches (helical) occupy residues 279–299 and 312–332; these read LCIS…EIIP and LLFT…VLNV. Topologically, residues 333–603 are cytoplasmic; that stretch reads HHRSPRTHTM…KYVAMVIDRI (271 aa). Disordered regions lie at residues 420–459 and 503–529; these read ETQP…NSSG and SLTE…SDQT. A Phosphoserine modification is found at Ser-427. The segment covering 431–442 has biased composition (basic and acidic residues); that stretch reads KVPDLKTSEVEK. Over residues 449–459 the composition is skewed to low complexity; the sequence is PGSCHPPNSSG. Residues 504 to 529 are compositionally biased toward polar residues; sequence LTESKPTGSPASLKTRPSQLPVSDQT. A phosphoserine mark is found at Ser-540 and Ser-543. Residues 604–624 form a helical membrane-spanning segment; the sequence is FLWMFIIVCLLGTVGLFLPPW.

This sequence belongs to the ligand-gated ion channel (TC 1.A.9) family. Acetylcholine receptor (TC 1.A.9.1) subfamily. Alpha-4/CHRNA4 sub-subfamily. As to quaternary structure, neuronal AChR is composed of two different types of subunits: alpha and beta. CHRNA4 forms heteropentameric neuronal acetylcholine receptors with CHRNB2 and CHRNB4, as well as CHRNA5 and CHRNB3 as accesory subunits. Found in two major stoichiometric forms, LS (low agonist sensitivity): (CHRNA4)3:(CHRNB2)2 and HS (high agonist sensitivity): (CHRNA4)2:(CHRNB2)3, the two stoichiometric forms differ in their unitary conductance, calcium permeability, ACh sensitivity and potentiation by divalent cation. Cells produce predominantly an (CHRNA4)3:(CHRNB2)2 nAChR. The (CHRNA4)2:(CHRNB2)3 expression is selectively up-regulated by nicotine and has lower single channel conductance and calcium permeability. In the striatum, also forms CHRNA4:CHRNA6:CHRNB2 complexes. Also found in the stoichiometric form: (CHRNA4:CHRNB2)2:CHRNB3. Interacts with RIC3; which is required for proper folding and assembly. Interacts with LYPD6.

The protein resides in the synaptic cell membrane. It localises to the cell membrane. It catalyses the reaction K(+)(in) = K(+)(out). The catalysed reaction is Na(+)(in) = Na(+)(out). It carries out the reaction Ca(2+)(in) = Ca(2+)(out). With respect to regulation, activated by a myriad of ligands such as acetylcholine, cytisine, nicotine, choline and epibatidine. Channel potentiation by calcium is stoichiometry-selective, CHRNA4:CHRNB2 nACh receptor is achieved by calcium association with topographically distinct sites framed by anionic residues within the CHRNA4 subunit and between the CHRNA4 and CHRNB2 subunits. nAChR activity is inhibited by the antagonist alpha-conotoxins BuIA, PnIA, GID and MII, small disulfide-constrained peptides from cone snails. Its function is as follows. Component of neuronal acetylcholine receptors (nAChRs) that function as pentameric, ligand-gated cation channels with high calcium permeability among other activities. nAChRs are excitatory neurotrasnmitter receptors formed by a collection of nAChR subunits known to mediate synaptic transmission in the nervous system and the neuromuscular junction. Each nAchR subunit confers differential attributes to channel properties, including activation, deactivation and desensitization kinetics, pH sensitivity, cation permeability, and binding to allosteric modulators. CHRNA4 forms heteropentameric neuronal acetylcholine receptors with CHRNB2 and CHRNB4, as well as CHRNA5 and CHRNB3 as accesory subunits. Is the most abundant nAChR subtype expressed in the central nervous system. Found in two major stoichiometric forms,(CHRNA4)3:(CHRNB2)2 and (CHRNA4)2:(CHRNB2)3, the two stoichiometric forms differ in their unitary conductance, calcium permeability, ACh sensitivity and potentiation by divalent cation. Involved in the modulation of calcium-dependent signaling pathways, influences the release of neurotransmitters, including dopamine, glutamate and GABA. The chain is Neuronal acetylcholine receptor subunit alpha-4 (Chrna4) from Mus musculus (Mouse).